Reading from the N-terminus, the 846-residue chain is MTDHGPDALDAFSPPRVGSASPVVISLVSPALTQMTVTPIDNSPKLPFNLAQGLESDLESHSDASNPLHPNVSHPMTRVALGEKAGAENLPVHRTKRRKLGNQRDNTAESMEDLVDCSRNHFQPAEDESTTQKQKTRKPAKPSEKGQKSEKTANLRLRGKVKKASDTQVLVPIDKSAQDPSQKFASQHRADEENGGLHLEEATSRRDYWTPIKDTNSASIDLTGSPVSIQADKAQAKSKDFRELMSEFNFSRETSHEVEAGCQLVNDKPTTKQLLEFMPQNCRTSKSLDSESLDTGTSSTSEGNGKRKQTKKAKRSAKSKITTITSLTTGRYESSLAPEGDHIPSSLVDNMVESIQPAEKAPSNRKNTKPKSKKAIPGRAECYALLKPAPTMEALKTIENQALLFGTSSQLERESSPNVYGLEPELGRDEVKSNSIQNISSEPSTGMGVSRFSKSKNLWGASSRDLDGYLLNVDMIDLVDPTPKITPKPGDERQSNLSNKNTERNIPEESSLLGEQVNAKDVELPDCLAGEISTSDTMQNSFEYLNTTNSQDGPVDDSMPNYDQLSTPELAKKLASFGFRPIKKRERIIELLEKCWESKRKSCIEPTTKPAILSTPQVVIQPIPPNANSKFMDSDSAIKPSSVPPKGTRKPKKITSKEITNPARSSWSTAKNLKSSSKPTDNMPDSMGSQSYVQPEIIEIEDSTDENLLESSKQPRDYRGAHTLASRSASSHITPQISSAPSQTVPIQTRASAGTNEKEIVDLPDIFLQITNAVKAQPRIRSVNGVKQPTWHEKIVMYDPIWLDDLTLWLNVEGFKLIKEDREVHPYLVREWCESKGICCCFRNKK.

7 disordered regions span residues 1 to 20, 84 to 111, 123 to 164, 283 to 322, 480 to 513, 624 to 690, and 723 to 751; these read MTDH…VGSA, KAGA…AESM, QPAE…VKKA, RTSK…SKIT, DPTP…SSLL, PPNA…MGSQ, and TLAS…QTRA. The segment covering 141–153 has biased composition (basic and acidic residues); that stretch reads KPSEKGQKSEKTA. Polar residues predominate over residues 293 to 303; it reads LDTGTSSTSEG. The span at 306-318 shows a compositional bias: basic residues; it reads KRKQTKKAKRSAK. 2 stretches are compositionally biased toward polar residues: residues 657–680 and 725–751; these read KEIT…SKPT and ASRS…QTRA.

The protein belongs to the SLX4 family. Forms a heterodimer with SLX1. Post-translationally, phosphorylated in response to DNA damage.

Its subcellular location is the nucleus. Functionally, regulatory subunit of the SLX1-SLX4 structure-specific endonuclease that resolves DNA secondary structures generated during DNA repair and recombination. Has endonuclease activity towards branched DNA substrates, introducing single-strand cuts in duplex DNA close to junctions with ss-DNA. This Arthroderma otae (strain ATCC MYA-4605 / CBS 113480) (Microsporum canis) protein is Structure-specific endonuclease subunit SLX4.